Here is a 109-residue protein sequence, read N- to C-terminus: UPF0060 membrane protein PCC8801_1733 (109 aa).

4 consecutive transmembrane segments (helical) span residues 7–27, 36–56, 58–78, and 87–107; these read LLYF…VWLW, YALL…LQTA, FGRV…LWGW, and SYDW…MYAP.

This sequence belongs to the UPF0060 family.

The protein localises to the cell inner membrane. This is UPF0060 membrane protein PCC8801_1733 from Rippkaea orientalis (strain PCC 8801 / RF-1) (Cyanothece sp. (strain PCC 8801)).